Here is a 915-residue protein sequence, read N- to C-terminus: Protein translocase subunit SecA (915 aa).

Residues Gln87, 105–109, and Asp516 each bind ATP; that span reads GEGKT. Positions 854–915 are disordered; it reads QKMQMRHEQL…KYKNCHGQLE (62 aa). Residues Cys899, Cys901, Cys910, and His911 each coordinate Zn(2+).

This sequence belongs to the SecA family. As to quaternary structure, monomer and homodimer. Part of the essential Sec protein translocation apparatus which comprises SecA, SecYEG and auxiliary proteins SecDF-YajC and YidC. Requires Zn(2+) as cofactor.

The protein localises to the cell inner membrane. The protein resides in the cytoplasm. It catalyses the reaction ATP + H2O + cellular proteinSide 1 = ADP + phosphate + cellular proteinSide 2.. In terms of biological role, part of the Sec protein translocase complex. Interacts with the SecYEG preprotein conducting channel. Has a central role in coupling the hydrolysis of ATP to the transfer of proteins into and across the cell membrane, serving both as a receptor for the preprotein-SecB complex and as an ATP-driven molecular motor driving the stepwise translocation of polypeptide chains across the membrane. The sequence is that of Protein translocase subunit SecA from Cellvibrio japonicus (strain Ueda107) (Pseudomonas fluorescens subsp. cellulosa).